Consider the following 473-residue polypeptide: ATP synthase subunit beta (473 aa).

158 to 165 (GGAGVGKT) provides a ligand contact to ATP.

It belongs to the ATPase alpha/beta chains family. As to quaternary structure, F-type ATPases have 2 components, CF(1) - the catalytic core - and CF(0) - the membrane proton channel. CF(1) has five subunits: alpha(3), beta(3), gamma(1), delta(1), epsilon(1). CF(0) has three main subunits: a(1), b(2) and c(9-12). The alpha and beta chains form an alternating ring which encloses part of the gamma chain. CF(1) is attached to CF(0) by a central stalk formed by the gamma and epsilon chains, while a peripheral stalk is formed by the delta and b chains.

The protein localises to the cell membrane. The catalysed reaction is ATP + H2O + 4 H(+)(in) = ADP + phosphate + 5 H(+)(out). Its function is as follows. Produces ATP from ADP in the presence of a proton gradient across the membrane. The catalytic sites are hosted primarily by the beta subunits. In Priestia megaterium (strain ATCC 12872 / QMB1551) (Bacillus megaterium), this protein is ATP synthase subunit beta.